We begin with the raw amino-acid sequence, 804 residues long: Probable exo-1,4-beta-xylosidase xlnD (804 aa).

A signal peptide spans 1–26 (MAHSMSRPVAATAAALLALALPQALA). Residues N29, N124, N148, N242, and N251 are each glycosylated (N-linked (GlcNAc...) asparagine). Residue D315 is part of the active site. N357, N390, N413, N444, N455, N573, N576, N665, N696, and N718 each carry an N-linked (GlcNAc...) asparagine glycan.

Belongs to the glycosyl hydrolase 3 family.

The protein resides in the secreted. The catalysed reaction is Hydrolysis of (1-&gt;4)-beta-D-xylans, to remove successive D-xylose residues from the non-reducing termini.. Its pathway is glycan degradation; xylan degradation. Functionally, xylan 1,4-beta-xylosidase involved in the hydrolysis of xylan, a major structural heterogeneous polysaccharide found in plant biomass representing the second most abundant polysaccharide in the biosphere, after cellulose. The sequence is that of Probable exo-1,4-beta-xylosidase xlnD (xlnD) from Aspergillus niger (strain ATCC MYA-4892 / CBS 513.88 / FGSC A1513).